We begin with the raw amino-acid sequence, 147 residues long: MKDRFYMTRAIKLSKLGEFTTSPNPNVGCVIVQNKKIVGEGWHKKYGENHAEINALNMAGEKAKGSTAYITLEPCNHFGKTPPCCDAIIQSGIKNVIISSLDPNPKVSGKGVLYLRKKGISVKIGLMSKESQKYNKGFFKRMRTGLP.

Residues 1 to 122 (MKDRFYMTRA…LYLRKKGISV (122 aa)) form the CMP/dCMP-type deaminase domain. Residue histidine 50 participates in Zn(2+) binding. Glutamate 52 acts as the Proton donor in catalysis. Zn(2+)-binding residues include cysteine 75 and cysteine 84.

The protein belongs to the cytidine and deoxycytidylate deaminase family. Zn(2+) is required as a cofactor.

The enzyme catalyses 2,5-diamino-6-hydroxy-4-(5-phosphoribosylamino)-pyrimidine + H2O + H(+) = 5-amino-6-(5-phospho-D-ribosylamino)uracil + NH4(+). It functions in the pathway cofactor biosynthesis; riboflavin biosynthesis; 5-amino-6-(D-ribitylamino)uracil from GTP: step 2/4. The chain is Diaminohydroxyphosphoribosylamino-pyrimidine deaminase (ribD1) from Buchnera aphidicola subsp. Schizaphis graminum (strain Sg).